The sequence spans 312 residues: Olfactory receptor 2L3 (312 aa).

Over 1 to 24 the chain is Extracellular; the sequence is MENYNQTSTDFILLGFFPPSRIGL. N5 carries N-linked (GlcNAc...) asparagine glycosylation. A helical membrane pass occupies residues 25–48; it reads FLFILIVFIFLMALIGNLSMILLI. The Cytoplasmic segment spans residues 49-56; the sequence is FLDTHLHT. The chain crosses the membrane as a helical span at residues 57 to 78; sequence PMYFLLSQLSLIDLNYISTIVP. Residues 79–99 are Extracellular-facing; that stretch reads KMASDFLSGNKSISFTGCGIQ. A glycan (N-linked (GlcNAc...) asparagine) is linked at N88. C96 and C188 are oxidised to a cystine. A helical membrane pass occupies residues 100 to 119; the sequence is SFFFSALGGAEALLLASMAY. Residues 120–138 are Cytoplasmic-facing; the sequence is DRYIAICFPLHYPIRMSKR. The chain crosses the membrane as a helical span at residues 139 to 157; sequence MCVLMITGSWIIGSINACA. Topologically, residues 158–194 are extracellular; sequence HTVYVLHIPYCQSRAINHFFCDVPAMVTLACMDTWVY. A helical transmembrane segment spans residues 195-218; that stretch reads EGTVFLSTTIFLVFPFIAISCSYG. Topologically, residues 219–235 are cytoplasmic; it reads RVLLAVYHMKSAEGRKK. Residues 236–258 traverse the membrane as a helical segment; the sequence is AYLTCSTHLTVVTFYYAPFVYTY. Residues 259 to 271 are Extracellular-facing; that stretch reads LRPRSLRSPTEDK. Residues 272 to 291 form a helical membrane-spanning segment; it reads VLAVFYTTLTPMLNPIIYSL. At 292–312 the chain is on the cytoplasmic side; sequence RNKEVMGALTRVSQRICSGKM.

Belongs to the G-protein coupled receptor 1 family.

The protein resides in the cell membrane. In terms of biological role, odorant receptor. The sequence is that of Olfactory receptor 2L3 (OR2L3) from Homo sapiens (Human).